Consider the following 241-residue polypeptide: Proteasome subunit alpha (241 aa).

It belongs to the peptidase T1A family. In terms of assembly, the 20S proteasome core is composed of 14 alpha and 14 beta subunits that assemble into four stacked heptameric rings, resulting in a barrel-shaped structure. The two inner rings, each composed of seven catalytic beta subunits, are sandwiched by two outer rings, each composed of seven alpha subunits. The catalytic chamber with the active sites is on the inside of the barrel. Has a gated structure, the ends of the cylinder being occluded by the N-termini of the alpha-subunits. Is capped at one or both ends by the proteasome regulatory ATPase, PAN.

It localises to the cytoplasm. The formation of the proteasomal ATPase PAN-20S proteasome complex, via the docking of the C-termini of PAN into the intersubunit pockets in the alpha-rings, triggers opening of the gate for substrate entry. Interconversion between the open-gate and close-gate conformations leads to a dynamic regulation of the 20S proteasome proteolysis activity. Component of the proteasome core, a large protease complex with broad specificity involved in protein degradation. The chain is Proteasome subunit alpha from Methanosphaerula palustris (strain ATCC BAA-1556 / DSM 19958 / E1-9c).